Here is a 533-residue protein sequence, read N- to C-terminus: Probable nucleolar protein 5-1 (533 aa).

Residues 280–398 enclose the Nop domain; that stretch reads IAPNLTALVG…LEARLRTLEG (119 aa). Positions 402–533 are disordered; that stretch reads GRLSGSAKGK…EKKKKKKTEV (132 aa). Over residues 412–423 the composition is skewed to basic and acidic residues; sequence PKIEVYDKDKKK. The segment covering 433 to 450 has biased composition (polar residues); the sequence is KTYNTAADSLLQTPTVDS. Basic and acidic residues-rich tracts occupy residues 474 to 489 and 515 to 524; these read TEEP…KTEA and MPAKKKEKSE.

Belongs to the NOP5/NOP56 family.

It is found in the nucleus. Its subcellular location is the nucleolus. Its function is as follows. Required for 60S ribosomal subunit biogenesis. The chain is Probable nucleolar protein 5-1 (NOP5-1) from Arabidopsis thaliana (Mouse-ear cress).